The primary structure comprises 228 residues: Superoxide dismutase [Mn], mitochondrial (228 aa).

A mitochondrion-targeting transit peptide spans 1–24 (MALRNLMTKKPFAGILTFRQQLRC). Residues H52, H100, D189, and H193 each coordinate Mn(2+).

It belongs to the iron/manganese superoxide dismutase family. Homotetramer. Requires Mn(2+) as cofactor.

The protein localises to the mitochondrion matrix. It catalyses the reaction 2 superoxide + 2 H(+) = H2O2 + O2. Functionally, destroys superoxide anion radicals which are normally produced within the cells and which are toxic to biological systems. The sequence is that of Superoxide dismutase [Mn], mitochondrial (SODA) from Capsicum annuum (Capsicum pepper).